We begin with the raw amino-acid sequence, 158 residues long: Transcription factor BTF3 homolog 4 (158 aa).

Lys-5 carries the N6-methyllysine modification. The region spanning 33–98 (TADDKKLQSS…AEAKPITEML (66 aa)) is the NAC-A/B domain. Thr-111 carries the phosphothreonine modification. The disordered stretch occupies residues 122 to 158 (RQVLDSKAPKPEDIDEEDDDVPDLVENFDEASKNEAN). A compositionally biased stretch (acidic residues) spans 134 to 150 (DIDEEDDDVPDLVENFD).

This sequence belongs to the NAC-beta family.

This Homo sapiens (Human) protein is Transcription factor BTF3 homolog 4 (BTF3L4).